The sequence spans 340 residues: E3 ubiquitin ligase BIG BROTHER-related (340 aa).

Disordered regions lie at residues 1–56 (MPME…GVGE) and 133–182 (YDED…GNSD). The segment covering 34–46 (NRQTGVVSDTGSG) has biased composition (polar residues). Acidic residues-rich tracts occupy residues 133–164 (YDED…EDGL) and 173–182 (DDQEDDGNSD). The segment at 288 to 329 (CVICRLDYEDDEDLILLPCKHSYHSECINNWLKINKVCPVCS) adopts an RING-type; atypical zinc-finger fold.

Post-translationally, auto-ubiquitinated.

The enzyme catalyses S-ubiquitinyl-[E2 ubiquitin-conjugating enzyme]-L-cysteine + [acceptor protein]-L-lysine = [E2 ubiquitin-conjugating enzyme]-L-cysteine + N(6)-ubiquitinyl-[acceptor protein]-L-lysine.. It participates in protein modification; protein ubiquitination. Its function is as follows. E3 ubiquitin-ligase probably involved in organ size regulation. In Arabidopsis thaliana (Mouse-ear cress), this protein is E3 ubiquitin ligase BIG BROTHER-related (BBR).